Reading from the N-terminus, the 652-residue chain is Adhesion G protein-coupled receptor E3 (652 aa).

The first 21 residues, 1–21 (MQGPLLLPGLCFLLSLFGAVT), serve as a signal peptide directing secretion. At 22 to 357 (QKTKTSCAKC…TSQEEDPVLT (336 aa)) the chain is on the extracellular side. The EGF-like 1 domain maps to 24–66 (TKTSCAKCPPNASCVNNTHCTCNHGYTSGSGQKLFTFPLETCN). Disulfide bonds link Cys-28-Cys-37, Cys-31-Cys-43, Cys-45-Cys-65, Cys-71-Cys-85, Cys-79-Cys-94, and Cys-96-Cys-117. N-linked (GlcNAc...) asparagine glycosylation is found at Asn-34 and Asn-39. The EGF-like 2; calcium-binding domain occupies 67–118 (DINECTPPYSVYCGFNAVCYNVEGSFYCQCVPGYRLHSGNEQFSNSNENTCQ). N-linked (GlcNAc...) asparagine glycans are attached at residues Asn-145, Asn-189, Asn-202, Asn-250, Asn-279, Asn-327, and Asn-334. One can recognise a GAIN-B domain in the interval 183-351 (KVLKIQNDSV…AVLMALTSQE (169 aa)). Cystine bridges form between Cys-304/Cys-333 and Cys-321/Cys-335. The tract at residues 304–351 (CVYWKSTGQGSQWSRDGCFLIHVNKSHTMCNCSHLSSFAVLMALTSQE) is GPS. The helical transmembrane segment at 358–378 (VITYVGLSVSLLCLLLAALTF) threads the bilayer. Topologically, residues 379-389 (LLCKAIRNTST) are cytoplasmic. Residues 390–410 (SLHLQLSLCLFLAHLLFLVGI) traverse the membrane as a helical segment. Topologically, residues 411–416 (DRTEPK) are extracellular. The chain crosses the membrane as a helical span at residues 417 to 437 (VLCSIIAGALHYLYLAAFTWM). Topologically, residues 438-464 (LLEGVHLFLTARNLTVVNYSSINRLMK) are cytoplasmic. Residues 465 to 485 (WIMFPVGYGVPAVTVAISAAS) form a helical membrane-spanning segment. Residues 486-508 (WPHLYGTADRCWLHLDQGFMWSF) lie on the Extracellular side of the membrane. The chain crosses the membrane as a helical span at residues 509–529 (LGPVCAIFSANLVLFILVFWI). The Cytoplasmic segment spans residues 530-557 (LKRKLSSLNSEVSTIQNTRMLAFKATAQ). Residues 558–578 (LFILGCTWCLGLLQVGPAAQV) form a helical membrane-spanning segment. The Extracellular portion of the chain corresponds to 579–580 (MA). The chain crosses the membrane as a helical span at residues 581-601 (YLFTIINSLQGFFIFLVYCLL). The Cytoplasmic segment spans residues 602-652 (SQQVQKQYQKWFREIVKSKSESETYTLSSKMGPDSKPSEGDVFPGQVKRKY). The interval 621 to 652 (SESETYTLSSKMGPDSKPSEGDVFPGQVKRKY) is disordered.

Belongs to the G-protein coupled receptor 2 family. Adhesion G-protein coupled receptor (ADGR) subfamily. As to quaternary structure, forms a heterodimer, consisting of a large extracellular region (alpha subunit) non-covalently linked to a seven-transmembrane moiety (beta subunit). Proteolytically cleaved into 2 subunits, an extracellular alpha subunit and a seven-transmembrane subunit. As to expression, displays a predominantly leukocyte-restricted expression, with highest levels in neutrophils, monocytes and macrophages.

Its subcellular location is the cell membrane. It localises to the secreted. Its function is as follows. Orphan receptor that may play a role myeloid-myeloid interactions during immune and inflammatory responses. A ligand for the soluble form of this receptor is present at the surface of monocytes-derived macrophages and activated neutrophils. The sequence is that of Adhesion G protein-coupled receptor E3 from Homo sapiens (Human).